The primary structure comprises 340 residues: Protein S-acyltransferase 10 (340 aa).

2 helical membrane passes run 34 to 54 (LLLK…LFLF) and 66 to 86 (PWYM…YFVT). In terms of domain architecture, DHHC spans 162–212 (LTCGYCHVEQPPRTKHCHDCDRCVLQFDHHCVWLGTCIGQKNHSKFWWYIC). The active-site S-palmitoyl cysteine intermediate is Cys-192. 2 helical membrane passes run 207–227 (FWWY…MYVD) and 241–261 (IIIL…LLLI).

The protein belongs to the DHHC palmitoyltransferase family. In terms of tissue distribution, expressed in mature embryos, embryo sacs, cotyledons, whole seedlings, hydathodes, guard cells, sites of lateral root initiation, root tips and phloem, but not in xylem.

Its subcellular location is the vacuole membrane. The catalysed reaction is L-cysteinyl-[protein] + hexadecanoyl-CoA = S-hexadecanoyl-L-cysteinyl-[protein] + CoA. Functionally, S-acyltransferase involved in protein lipid modification. Catalyzes the palmitoylation of proteins peripheral or integral to the tonoplast. Required for the tonoplast localization of CBL2, CBL3 and CBL6, but not for the plasma membrane localization of CBL9, for the endosome localization of RABF1 or for the endomembrane localization of RABF2B. The sequence is that of Protein S-acyltransferase 10 (PAT10) from Arabidopsis thaliana (Mouse-ear cress).